A 209-amino-acid chain; its full sequence is Large ribosomal subunit protein uL3 (209 aa).

Residue Gln-150 is modified to N5-methylglutamine.

This sequence belongs to the universal ribosomal protein uL3 family. As to quaternary structure, part of the 50S ribosomal subunit. Forms a cluster with proteins L14 and L19. Post-translationally, methylated by PrmB.

One of the primary rRNA binding proteins, it binds directly near the 3'-end of the 23S rRNA, where it nucleates assembly of the 50S subunit. This Escherichia coli O139:H28 (strain E24377A / ETEC) protein is Large ribosomal subunit protein uL3.